The following is a 129-amino-acid chain: Follitropin subunit beta (129 aa).

The N-terminal stretch at Met-1–Ser-20 is a signal peptide. Disulfide bonds link Cys-21–Cys-69, Cys-35–Cys-84, Cys-38–Cys-122, Cys-46–Cys-100, Cys-50–Cys-102, and Cys-105–Cys-112. N-linked (GlcNAc...) asparagine glycosylation is found at Asn-25 and Asn-42.

This sequence belongs to the glycoprotein hormones subunit beta family. Heterodimer. The active follitropin is a heterodimer composed of an alpha chain/CGA shared with other hormones and a unique beta chain/FSHB shown here.

It is found in the secreted. Together with the alpha chain CGA constitutes follitropin, the follicle-stimulating hormone, and provides its biological specificity to the hormone heterodimer. Binds FSHR, a G protein-coupled receptor, on target cells to activate downstream signaling pathways. Follitropin is involved in follicle development and spermatogenesis in reproductive organs. The polypeptide is Follitropin subunit beta (FSHB) (Saimiri boliviensis boliviensis (Bolivian squirrel monkey)).